Reading from the N-terminus, the 272-residue chain is 2,3,4,5-tetrahydropyridine-2,6-dicarboxylate N-succinyltransferase (272 aa).

2 residues coordinate substrate: arginine 104 and aspartate 141.

This sequence belongs to the transferase hexapeptide repeat family. In terms of assembly, homotrimer.

Its subcellular location is the cytoplasm. The catalysed reaction is (S)-2,3,4,5-tetrahydrodipicolinate + succinyl-CoA + H2O = (S)-2-succinylamino-6-oxoheptanedioate + CoA. The protein operates within amino-acid biosynthesis; L-lysine biosynthesis via DAP pathway; LL-2,6-diaminopimelate from (S)-tetrahydrodipicolinate (succinylase route): step 1/3. The chain is 2,3,4,5-tetrahydropyridine-2,6-dicarboxylate N-succinyltransferase from Alkalilimnicola ehrlichii (strain ATCC BAA-1101 / DSM 17681 / MLHE-1).